A 110-amino-acid polypeptide reads, in one-letter code: UPF0060 membrane protein BTH_I2792 (110 aa).

Helical transmembrane passes span 9–29 (ALFV…WLVL), 34–54 (PVWL…LLTL), 64–84 (AAYG…VDGV), and 86–106 (LSRW…VIAL).

The protein belongs to the UPF0060 family.

The protein localises to the cell inner membrane. The protein is UPF0060 membrane protein BTH_I2792 of Burkholderia thailandensis (strain ATCC 700388 / DSM 13276 / CCUG 48851 / CIP 106301 / E264).